The chain runs to 20 residues: ATP synthase subunit beta, chloroplastic (20 aa).

Residues 1–10 (METTNESLGY) are compositionally biased toward polar residues. Residues 1-20 (METTNESLGYTDQIIGPVLD) are disordered.

This sequence belongs to the ATPase alpha/beta chains family. In terms of assembly, F-type ATPases have 2 components, CF(1) - the catalytic core - and CF(0) - the membrane proton channel. CF(1) has five subunits: alpha(3), beta(3), gamma(1), delta(1), epsilon(1). CF(0) has four main subunits: a(1), b(1), b'(1) and c(9-12).

The protein resides in the plastid. The protein localises to the chloroplast thylakoid membrane. It catalyses the reaction ATP + H2O + 4 H(+)(in) = ADP + phosphate + 5 H(+)(out). Produces ATP from ADP in the presence of a proton gradient across the membrane. The catalytic sites are hosted primarily by the beta subunits. The polypeptide is ATP synthase subunit beta, chloroplastic (Chattonella marina var. antiqua (Red tide flagellate)).